Here is a 295-residue protein sequence, read N- to C-terminus: Bifunctional protein FolD (295 aa).

NADP(+) is bound by residues 165-167 (GRS), S190, and I231.

This sequence belongs to the tetrahydrofolate dehydrogenase/cyclohydrolase family. In terms of assembly, homodimer.

It catalyses the reaction (6R)-5,10-methylene-5,6,7,8-tetrahydrofolate + NADP(+) = (6R)-5,10-methenyltetrahydrofolate + NADPH. The catalysed reaction is (6R)-5,10-methenyltetrahydrofolate + H2O = (6R)-10-formyltetrahydrofolate + H(+). The protein operates within one-carbon metabolism; tetrahydrofolate interconversion. Functionally, catalyzes the oxidation of 5,10-methylenetetrahydrofolate to 5,10-methenyltetrahydrofolate and then the hydrolysis of 5,10-methenyltetrahydrofolate to 10-formyltetrahydrofolate. The polypeptide is Bifunctional protein FolD (Nitrosomonas eutropha (strain DSM 101675 / C91 / Nm57)).